The chain runs to 598 residues: Nuclear receptor subfamily 4 group A member 1 (598 aa).

Disordered stretches follow at residues 1-50 (MPCI…PTAL) and 120-159 (LDETLSSSGSDYYGSPCSAPSPSTPSFQPPQLSPWDGSFG). 2 stretches are compositionally biased toward low complexity: residues 37 to 50 (LASPEAAPTAPTAL) and 134 to 145 (SPCSAPSPSTPS). Positions 171-466 (RAWTEQLPKA…PAEGKLIFCS (296 aa)) are required for nuclear import. A DNA-binding region (nuclear receptor) is located at residues 264 to 339 (EGRCAVCGDN…VGMVKEVVRT (76 aa)). 2 consecutive NR C4-type zinc fingers follow at residues 267-287 (CAVCGDNASCQHYGVRTCEGC) and 303-327 (CLANKDCPVDKRRRNRCQFCRFQKC). The tract at residues 268-354 (AVCGDNASCQ…RRGRLPSKPK (87 aa)) is required for binding NBRE-containing DNA. Residues 299 to 361 (AKYICLANKD…KPKQPPDASP (63 aa)) are required for the interaction with RXRA. Position 341 is a phosphoserine; by PKA (S341). The disordered stretch occupies residues 341-361 (SLKGRRGRLPSKPKQPPDASP). The residue at position 351 (S351) is a Phosphoserine; by PKA, RPS6KA1 and RPS6KA3. The region spanning 360–595 (SPANLLTSLV…PIVDKIFMDT (236 aa)) is the NR LBD domain. The segment at 521–544 (PRRVEELQNRIASCLKEHVSAVAG) is binds lipopolysaccharide. The AF-2 stretch occupies residues 584–595 (PPPIVDKIFMDT).

Belongs to the nuclear hormone receptor family. NR4 subfamily. As to quaternary structure, binds the NGFI-B response element (NBRE) as a monomer. Binds the Nur response element (NurRE), consisting of two inverse NBRE-related octanucleotide repeats separated by 6 base-pairs, as a dimer. Interacts (via N-terminus) with NLRP3 (via LRR repeat domain); the interaction is direct, requires binding of NR4A1/Nur77 to NBRE-containing dsDNA and lipopolysaccharide, and leads to non-canonical NLRP3 inflammasome activation. Interacts with GADD45GIP1. Interacts with STK11. Heterodimer (via DNA-binding domain) with RXRA (via C-terminus); DNA-binding of the heterodimer is enhanced by 9-cis retinoic acid. Competes for the RXRA interaction with EP300 and thereby attenuates EP300 mediated acetylation of RXRA. Interacts with NCOA1. Interacts with NCOA2. Interacts with NCOA3. Zn(2+) serves as cofactor. In terms of processing, phosphorylated at Ser-351 by RPS6KA1 and RPS6KA3 in response to mitogenic or stress stimuli. Post-translationally, acetylated by p300/CBP, acetylation increases stability. Deacetylated by HDAC1.

Its subcellular location is the cytoplasm. The protein localises to the cytosol. It localises to the nucleus. The protein resides in the mitochondrion. Functionally, orphan nuclear receptor. Binds the NGFI-B response element (NBRE) 5'-AAAGGTCA-3'. Binds 9-cis-retinoic acid outside of its ligand-binding (NR LBD) domain. Participates in energy homeostasis by sequestrating the kinase STK11 in the nucleus, thereby attenuating cytoplasmic AMPK activation. Regulates the inflammatory response in macrophages by regulating metabolic adaptations during inflammation, including repressing the transcription of genes involved in the citric acid cycle (TCA). Inhibits NF-kappa-B signaling by binding to low-affinity NF-kappa-B binding sites, such as at the IL2 promoter. May act concomitantly with NR4A2 in regulating the expression of delayed-early genes during liver regeneration. Plays a role in the vascular response to injury. In the cytosol, upon its detection of both bacterial lipopolysaccharide (LPS) and NBRE-containing mitochondrial DNA released by GSDMD pores during pyroptosis, it promotes non-canonical NLRP3 inflammasome activation by stimulating association of NLRP3 and NEK7. In Canis lupus familiaris (Dog), this protein is Nuclear receptor subfamily 4 group A member 1 (NR4A1).